We begin with the raw amino-acid sequence, 699 residues long: Glycine--tRNA ligase beta subunit (699 aa).

This sequence belongs to the class-II aminoacyl-tRNA synthetase family. In terms of assembly, tetramer of two alpha and two beta subunits.

The protein localises to the cytoplasm. It catalyses the reaction tRNA(Gly) + glycine + ATP = glycyl-tRNA(Gly) + AMP + diphosphate. The chain is Glycine--tRNA ligase beta subunit from Methylobacterium radiotolerans (strain ATCC 27329 / DSM 1819 / JCM 2831 / NBRC 15690 / NCIMB 10815 / 0-1).